Consider the following 163-residue polypeptide: Pheromone-binding protein (163 aa).

The first 21 residues, 1-21, serve as a signal peptide directing secretion; the sequence is MLRKISLLLLPVFVAINLVHS. Disulfide bonds link Cys-40–Cys-75, Cys-71–Cys-129, and Cys-118–Cys-138.

Belongs to the PBP/GOBP family. In terms of assembly, homodimer. Antenna.

Its function is as follows. This major soluble protein in olfactory sensilla of male moths might serve to solubilize the extremely hydrophobic pheromone molecules and to transport pheromone through the aqueous lymph to receptors located on olfactory cilia. This Antheraea polyphemus (Polyphemus moth) protein is Pheromone-binding protein.